The following is a 90-amino-acid chain: DNA-directed RNA polymerase subunit omega (90 aa).

Positions 69-90 (RQEQQEQDAAELAAVSSITHNR) are disordered.

It belongs to the RNA polymerase subunit omega family. In terms of assembly, the RNAP catalytic core consists of 2 alpha, 1 beta, 1 beta' and 1 omega subunit. When a sigma factor is associated with the core the holoenzyme is formed, which can initiate transcription.

It catalyses the reaction RNA(n) + a ribonucleoside 5'-triphosphate = RNA(n+1) + diphosphate. Its function is as follows. Promotes RNA polymerase assembly. Latches the N- and C-terminal regions of the beta' subunit thereby facilitating its interaction with the beta and alpha subunits. In Aliivibrio salmonicida (strain LFI1238) (Vibrio salmonicida (strain LFI1238)), this protein is DNA-directed RNA polymerase subunit omega.